A 1208-amino-acid polypeptide reads, in one-letter code: DNA-directed RNA polymerase subunit beta (1208 aa).

The protein belongs to the RNA polymerase beta chain family. As to quaternary structure, the RNAP catalytic core consists of 2 alpha, 1 beta, 1 beta' and 1 omega subunit. When a sigma factor is associated with the core the holoenzyme is formed, which can initiate transcription.

It carries out the reaction RNA(n) + a ribonucleoside 5'-triphosphate = RNA(n+1) + diphosphate. Its function is as follows. DNA-dependent RNA polymerase catalyzes the transcription of DNA into RNA using the four ribonucleoside triphosphates as substrates. The chain is DNA-directed RNA polymerase subunit beta from Enterococcus faecium (Streptococcus faecium).